The primary structure comprises 259 residues: Type III pantothenate kinase (259 aa).

6–13 (DCGNTNTL) contacts ATP. 108–111 (GADR) is a binding site for substrate. Aspartate 110 acts as the Proton acceptor in catalysis. Aspartate 130 is a binding site for K(+). An ATP-binding site is contributed by threonine 133. Threonine 185 is a binding site for substrate.

This sequence belongs to the type III pantothenate kinase family. In terms of assembly, homodimer. It depends on NH4(+) as a cofactor. Requires K(+) as cofactor.

It is found in the cytoplasm. It carries out the reaction (R)-pantothenate + ATP = (R)-4'-phosphopantothenate + ADP + H(+). Its pathway is cofactor biosynthesis; coenzyme A biosynthesis; CoA from (R)-pantothenate: step 1/5. In terms of biological role, catalyzes the phosphorylation of pantothenate (Pan), the first step in CoA biosynthesis. This chain is Type III pantothenate kinase, found in Maricaulis maris (strain MCS10) (Caulobacter maris).